A 340-amino-acid polypeptide reads, in one-letter code: Lipopolysaccharide core biosynthesis glycosyltransferase LpsE (340 aa).

It belongs to the glycosyltransferase group 1 family. Glycosyltransferase 4 subfamily.

Its pathway is bacterial outer membrane biogenesis; LPS core biosynthesis. The protein is Lipopolysaccharide core biosynthesis glycosyltransferase LpsE (lpsE) of Rhizobium meliloti (strain 1021) (Ensifer meliloti).